The chain runs to 485 residues: Aprataxin and PNK-like factor (485 aa).

The FHA-like domain maps to 1 to 84 (MSGGFELQPQ…CVLSTHSEME (84 aa)). S92 carries the post-translational modification Phosphoserine; by ATM. The disordered stretch occupies residues 103–156 (EIPKSSSADLPDKTPSAPRRERSTETAKPQAAANNMSFIGESRDLSKQQPNPSE). S125 bears the Phosphoserine mark. A KBM motif is present at residues 157–166 (RKRILPAWML). The tract at residues 206-348 (GKKRLISSGS…VPNGSEENKV (143 aa)) is disordered. Polar residues-rich tracts occupy residues 212–223 (SSGSSESTSAKQ), 237–249 (SIISSKEMPQSFS), and 286–309 (KGSSNEDSTARSCSESYSSTQSKS). Residues 310–319 (FCDKPQKSHP) are compositionally biased toward basic and acidic residues. 4 residues coordinate a glycoprotein: R350, Y355, Y360, and R361. The PBZ-type 1 zinc-finger motif lies at 351-372 (TSCMYGANCYRKNPVHFQHFSH). The tract at residues 380-390 (GVNITCQDEAD) is flexible linker. The PBZ-type 2 zinc finger occupies 393 to 414 (PECPYGASCYRKNPQHKIEYRH). The a glycoprotein site is built by Y397, Y402, and R403. Residues 420 to 470 (RSISDEDDNVGQPNEYNLNDSFIDDEEEEYEPTDEDSDWEPEKEDLEKEDM) form a disordered region. The segment covering 441–469 (FIDDEEEEYEPTDEDSDWEPEKEDLEKED) has biased composition (acidic residues). An NAP1L motif motif is present at residues 449–473 (YEPTDEDSDWEPEKEDLEKEDMEGL).

The protein belongs to the APLF family. Interacts with LIG4. Interacts with PARP1. Interacts with XRCC4. Interacts (via KBM motif) with XRCC5 and XRCC6; promoting recruitment to DNA damage sites. Interacts with XRCC1. Interacts (via C-terminal disordered region) with histones; interacts with histone H2A, H2B and H3-H4. Post-translationally, poly-ADP-ribosylated. In addition to binding non covalently poly-ADP-ribose via its PBZ-type zinc fingers, the protein is also covalently poly-ADP-ribosylated by PARP1. In terms of processing, phosphorylated in an ATM-dependent manner upon double-strand DNA break.

The protein localises to the nucleus. The protein resides in the chromosome. It localises to the cytoplasm. It is found in the cytosol. Functionally, histone chaperone involved in single-strand and double-strand DNA break repair. Recruited to sites of DNA damage through interaction with branched poly-ADP-ribose chains, a polymeric post-translational modification synthesized transiently at sites of chromosomal damage to accelerate DNA strand break repair reactions. Following recruitment to DNA damage sites, acts as a histone chaperone that mediates histone eviction during DNA repair and promotes recruitment of histone variant MACROH2A1. Also has a nuclease activity: displays apurinic-apyrimidinic (AP) endonuclease and 3'-5' exonuclease activities in vitro. Also able to introduce nicks at hydroxyuracil and other types of pyrimidine base damage. Together with PARP3, promotes the retention of the LIG4-XRCC4 complex on chromatin and accelerate DNA ligation during non-homologous end-joining (NHEJ). Also acts as a negative regulator of cell pluripotency by promoting histone exchange. Required for the embryo implantation during the epithelial to mesenchymal transition in females. The protein is Aprataxin and PNK-like factor (APLF) of Bos taurus (Bovine).